Consider the following 110-residue polypeptide: MLNYLWFFLAALFEIAGCYAFWMWLRQGKSALWVIPALVSLTLFALLLTKVEATYAGRAYAAYGGIYIVASIGWLAVVERVRPLGSDWLGLALCVIGASVILFGPRFSNG.

4 helical membrane-spanning segments follow: residues 5–25, 31–51, 59–79, and 84–104; these read LWFFLAALFEIAGCYAFWMWL, ALWVIPALVSLTLFALLLTKV, AYAAYGGIYIVASIGWLAVVE, and LGSDWLGLALCVIGASVILFG.

The protein belongs to the UPF0060 family.

The protein localises to the cell inner membrane. This chain is UPF0060 membrane protein PFL_4337, found in Pseudomonas fluorescens (strain ATCC BAA-477 / NRRL B-23932 / Pf-5).